Reading from the N-terminus, the 130-residue chain is Small ribosomal subunit protein uS9 (130 aa).

This sequence belongs to the universal ribosomal protein uS9 family.

This chain is Small ribosomal subunit protein uS9, found in Pseudomonas syringae pv. tomato (strain ATCC BAA-871 / DC3000).